We begin with the raw amino-acid sequence, 208 residues long: Cytidylate kinase (208 aa).

9–17 provides a ligand contact to ATP; it reads GPSASGKSS.

The protein belongs to the cytidylate kinase family. Type 1 subfamily.

Its subcellular location is the cytoplasm. The enzyme catalyses CMP + ATP = CDP + ADP. The catalysed reaction is dCMP + ATP = dCDP + ADP. The sequence is that of Cytidylate kinase from Thermus thermophilus (strain ATCC BAA-163 / DSM 7039 / HB27).